The sequence spans 323 residues: MKVAVLFLCGVALAAASPSWEHFKGKYGRQYVDAEEDSYRRVIFEQNQKYIEEFNKKYENGEVTFNLAMNKFGDMTLEEFNAVMKGNIPRRSAPVSVFYPKKETGPQATEVDWRTKGAVTPVKDQGQCGSCWAFSTTGSLEGQHFLKTGSLISLAEQQLVDCSRPYGPQGCNGGWMNDAFDYIKANNGIDTEAAYPYEARDGSCRFDSNSVAATCSGHTNIASGSETGLQQAVRDIGPISVTIDAAHSSFQFYSSGVYYEPSCSPSYLDHAVLAVGYGSEGGQDFWLVKNSWATSWGDAGYIKMSRNRNNNCGIATVASYPLV.

A signal peptide spans 1-16; the sequence is MKVAVLFLCGVALAAA. Residues 17–107 constitute a propeptide, activation peptide; that stretch reads SPSWEHFKGK…FYPKKETGPQ (91 aa). Intrachain disulfides connect C128/C171, C162/C204, and C263/C312. C131 is a catalytic residue. Active-site residues include H270 and N290.

This sequence belongs to the peptidase C1 family.

Inhibited by E-64, antipain, leupeptin, heavy metal ions, iodoacetic acid, dithionitrobenzene, p-hydroxymercuri-benzoate; activated by mercaptoethanol and dithiothreitol. This chain is Digestive cysteine proteinase 2 (LCP2), found in Homarus americanus (American lobster).